Here is a 489-residue protein sequence, read N- to C-terminus: L-asparagine permease 1 (489 aa).

The next 12 helical transmembrane spans lie at Gln-25–Gly-45, Lys-49–Leu-69, Ala-100–Ile-120, Ile-137–Phe-157, Phe-162–Phe-182, Trp-210–Val-230, Ile-255–Tyr-275, Ile-289–Ser-309, Tyr-344–Lys-364, Phe-369–Leu-389, Ser-413–Ser-433, and Thr-439–Val-459.

Belongs to the amino acid-polyamine-organocation (APC) superfamily. Amino acid transporter (AAT) (TC 2.A.3.1) family.

It is found in the cell membrane. The polypeptide is L-asparagine permease 1 (ansP1) (Mycobacterium bovis (strain ATCC BAA-935 / AF2122/97)).